The chain runs to 1094 residues: Transcriptional regulator CRZ1 (1094 aa).

Disordered regions lie at residues 1–29, 44–81, 93–428, and 477–519; these read MADPASPPSFDAIFAQQPVRRSSSTSTSS, FNSDAPLVDEPQSLSEQARKQQRDPSKDGNNKRYLDMM, GRRQ…FPPS, and RAGA…RTLS. Composition is skewed to basic and acidic residues over residues 60 to 78 and 94 to 103; these read QARKQQRDPSKDGNNKRYL and RRQESLRKES. Residue S103 is modified to Phosphoserine. Residues 148 to 159 are compositionally biased toward low complexity; that stretch reads PNQPQQPSQQPP. Composition is skewed to polar residues over residues 166–187 and 201–217; these read SEQSVHYASVQQPQYSSFQSSG and GTTSSMNDSMLSSQISP. Composition is skewed to low complexity over residues 228–241 and 252–262; these read QPPQQQQQQQQQQQ and EQQQQYAQGEG. A compositionally biased stretch (polar residues) spans 286–324; it reads VISNTSHPSQYPSRTSSPFPQQSQSNMVPASTVNQTRTE. A phosphoserine mark is found at S288 and S329. A compositionally biased stretch (low complexity) spans 325-342; that stretch reads SFPASRSPSPFAPQQASQ. Polar residues-rich tracts occupy residues 343–379 and 396–412; these read TEASNHVVSTPSMGQPTYPRASSSPRTNPNSPFFNKP and IVTQSTSNNHSKGLNQP. Over residues 477–493 the composition is skewed to low complexity; sequence RAGAARGAQRQGPQGQG. Positions 507–519 are enriched in polar residues; it reads PSPQSHPLPRTLS. Phosphoserine occurs at positions 508, 569, 765, and 810. A disordered region spans residues 835 to 888; that stretch reads ITGDDGSLLPPSNRGHAMSHSRHSSTSSIRSASPALSISSQGSSFSHHSPRMDM. Residues 858 to 881 are compositionally biased toward low complexity; the sequence is SSTSSIRSASPALSISSQGSSFSH. The C2H2-type 1 zinc-finger motif lies at 944-968; the sequence is FKCPVPGCGSTFTRHFNLKGHLRSH. The C2H2-type 2; degenerate zinc-finger motif lies at 1007-1029; it reads FECEGCGKKFARLDALTRHHKSE. Positions 1037–1094 are disordered; the sequence is THPLPTNFDGSPMSESQYKTYKGIKSTPEGSGRRLSSTASGSGSGKRRSKKSETSEED.

In terms of processing, phosphorylated. Dephosphorylated by calcineurin (CNA1) which promotes nuclear localization.

The protein localises to the cytoplasm. The protein resides in the cytosol. It localises to the nucleus. DNA-binding transcriptional activator that interacts with calcineurin-dependent response element (CDRE) promoters. Activates expression of genes required to maintain cell wall integrity during stress. Activates expression of genes required for transepithelial migration through the host blood-brain barrier. Required for adaptation to host temperature during infection. The chain is Transcriptional regulator CRZ1 from Cryptococcus neoformans var. grubii serotype A (strain H99 / ATCC 208821 / CBS 10515 / FGSC 9487) (Filobasidiella neoformans var. grubii).